The primary structure comprises 423 residues: Probable peptidoglycan glycosyltransferase FtsW (423 aa).

Topologically, residues 1–53 (MNLKEKLFPENRLGLNRFWNFSRGGIDNFRTGLRDAVSGVEQTRSRMMEYDQL) are cytoplasmic. The chain crosses the membrane as a helical span at residues 54–74 (LVWAILSLMLIGLVMVYSASI). Topologically, residues 75–88 (TLADGPKYANYSSN) are periplasmic. A helical transmembrane segment spans residues 89–109 (FFLIRHMISLAIAIGVGIWAF). Residues 110–119 (KIPTKVWDRY) lie on the Cytoplasmic side of the membrane. The helical transmembrane segment at 120–140 (SPVIFGITVLLLIAVLIPGVG) threads the bilayer. Residues 141 to 149 (RGVNGAKRW) are Periplasmic-facing. The helical transmembrane segment at 150–170 (IPLGLMNFQSSELMKFAAVIF) threads the bilayer. At 171–184 (AASYTVQRQEYLHS) the chain is on the cytoplasmic side. Residues 185–205 (FVKGMLPMGIAVALVGGLLMA) form a helical membrane-spanning segment. Over 206–208 (EPD) the chain is Periplasmic. The chain crosses the membrane as a helical span at residues 209 to 229 (MGAFVVVALIAFGILFLGGIN). Residues 230–231 (AK) lie on the Cytoplasmic side of the membrane. Residues 232 to 252 (LFGGLIAVGLMSGATMIAFSP) traverse the membrane as a helical segment. The Periplasmic segment spans residues 253 to 310 (LRRGRMLAFMDPWQVDNAANKGYQLTHSLMAFGRGEWFGTGLGGSVEKLHYLPEAHTD). The helical transmembrane segment at 311–331 (FIMAVIGEELGFVGVVVMIFL) threads the bilayer. Residues 332 to 359 (FYWIVRRAFLIGRTALQLDRSFAGLAAK) lie on the Cytoplasmic side of the membrane. The helical transmembrane segment at 360–380 (GVAIWIGWQAFINMGVNLGLL) threads the bilayer. Over 381–386 (PTKGLT) the chain is Periplasmic. A helical transmembrane segment spans residues 387-407 (LPLVSYGGSGILMNAVAMAML). The Cytoplasmic portion of the chain corresponds to 408 to 423 (LRIDFENRILMRGGKL).

The protein belongs to the SEDS family. FtsW subfamily.

Its subcellular location is the cell inner membrane. It catalyses the reaction [GlcNAc-(1-&gt;4)-Mur2Ac(oyl-L-Ala-gamma-D-Glu-L-Lys-D-Ala-D-Ala)](n)-di-trans,octa-cis-undecaprenyl diphosphate + beta-D-GlcNAc-(1-&gt;4)-Mur2Ac(oyl-L-Ala-gamma-D-Glu-L-Lys-D-Ala-D-Ala)-di-trans,octa-cis-undecaprenyl diphosphate = [GlcNAc-(1-&gt;4)-Mur2Ac(oyl-L-Ala-gamma-D-Glu-L-Lys-D-Ala-D-Ala)](n+1)-di-trans,octa-cis-undecaprenyl diphosphate + di-trans,octa-cis-undecaprenyl diphosphate + H(+). Its pathway is cell wall biogenesis; peptidoglycan biosynthesis. Functionally, peptidoglycan polymerase that is essential for cell division. This is Probable peptidoglycan glycosyltransferase FtsW from Polynucleobacter necessarius subsp. necessarius (strain STIR1).